An 822-amino-acid chain; its full sequence is Calpain-3 (822 aa).

The interval 1–36 (MPTVISASVAPRTGAEPRSPGPIAQAAQGKGTEAGG) is disordered. The Calpain catalytic domain occupies 74–418 (LFVDPEFPPD…FTKLEICNLT (345 aa)). Catalysis depends on residues Cys-129, His-335, and Asn-359. The segment at 419–587 (ADALESDKLQ…KRNLSEEVEN (169 aa)) is domain III. The segment at 588–649 (TISVDRPVKK…LKPGNIDQES (62 aa)) is linker. A disordered region spans residues 600 to 651 (PKPIIFGSDRANSNKELGVDQESEEGKDNTSPDKQAKSPQLKPGNIDQESKE). Positions 623–635 (EEGKDNTSPDKQA) are enriched in basic and acidic residues. 4 EF-hand domains span residues 650–684 (KEQR…VVNK), 693–726 (FTLE…KKIK), 723–758 (KKIK…AGFH), and 788–822 (VRLE…TMYA). Positions 650-822 (KEQRQFRNIF…LEWLQLTMYA (173 aa)) are domain IV. Ca(2+) contacts are provided by Ala-663, Asp-666, Glu-668, Glu-673, Asp-706, Asp-708, Ser-710, Arg-712, Glu-717, Asp-736, Asp-738, Ser-740, Thr-742, Glu-747, Asp-801, Asp-803, Asp-805, and Ile-807.

The protein belongs to the peptidase C2 family. As to quaternary structure, homodimer; via EF-hand domain 4. Interacts with TTN/titin. Interacts with CMYA5; this interaction, which results in CMYA5 proteolysis, may protect CAPN3 from autolysis. Interacts with SIMC1. Interacts with UTP25; the interaction is required for CAPN3 translocation to the nucleolus. In terms of tissue distribution, skeletal muscle.

It localises to the cytoplasm. It is found in the nucleus. Its subcellular location is the nucleolus. The enzyme catalyses Broad endopeptidase activity.. With respect to regulation, activated by micromolar concentrations of calcium and inhibited by calpastatin. In terms of biological role, calcium-regulated non-lysosomal thiol-protease. Proteolytically cleaves CTBP1. Mediates, with UTP25, the proteasome-independent degradation of p53/TP53. This Ovis aries (Sheep) protein is Calpain-3 (CAPN3).